Reading from the N-terminus, the 307-residue chain is Atrochrysone carboxyl ACP thioesterase (307 aa).

Zn(2+) contacts are provided by His-104, His-106, Asp-108, and His-109. Asp-108 acts as the Proton donor/acceptor in catalysis.

The protein belongs to the metallo-beta-lactamase superfamily. Zn(2+) is required as a cofactor.

It carries out the reaction atrochrysone carboxyl-[ACP] + H2O = atrochrysone carboxylate + holo-[ACP] + H(+). The protein operates within secondary metabolite biosynthesis. In terms of biological role, atrochrysone carboxyl ACP thioesterase; part of the gene cluster that mediates the biosynthesis of monodictyphenone, a prenyl xanthone derivative. The pathway begins with the synthesis of atrochrysone thioester by the polyketide synthase (PKS) mdpG. The atrochrysone carboxyl ACP thioesterase mdpF then breaks the thioester bond and releases the atrochrysone carboxylic acid from mdpG. The atrochrysone carboxylic acid is then converted to atrochrysone which is further transformed into emodin anthrone. The next step is performed by the anthrone oxygenase mdpH that catalyzes the oxidation of emodinanthrone to emodin. Emodin is further modified to yield monodictyphenone via several steps involving mdpB, mdpC mdpJ, mdpK and mdpL. The short chain dehydrogenase mdpC converts the tautomers of emodin hydroquinone into the 3-hydroxy-3,4-dihydroan-thracen-1(2H)-one derivative. These enzymes with xptA, xptB and xptC are also proposed to be involved in the synthesis of shamixanthone from emodin. Especially, direct reduction of emodin by the short chain dehydrogenase mdpC followed by dehydration catalyzed by the scytalone dehydratase-like protein mdpB gives loss of oxygen and formation of chrysophanol intermediate in two simple steps. The sequence is that of Atrochrysone carboxyl ACP thioesterase from Emericella nidulans (strain FGSC A4 / ATCC 38163 / CBS 112.46 / NRRL 194 / M139) (Aspergillus nidulans).